Reading from the N-terminus, the 677-residue chain is Probable potassium transport system protein Kup (677 aa).

12 consecutive transmembrane segments (helical) span residues 13–33, 54–74, 98–118, 137–157, 171–191, 217–237, 249–269, 296–316, 345–365, 374–394, 402–422, and 429–449; these read GALI…LYTM, VSLV…IIAL, WLLL…TLTP, FIFP…LLIV, IFGP…LVNI, TGIF…ALYS, VSWI…GAWI, IFGV…LISG, MYIG…VWAF, AYGL…YQFI, ILAF…LIAS, and GGYA…IWFY.

Belongs to the HAK/KUP transporter (TC 2.A.72) family.

It localises to the cell membrane. It carries out the reaction K(+)(in) + H(+)(in) = K(+)(out) + H(+)(out). In terms of biological role, transport of potassium into the cell. Likely operates as a K(+):H(+) symporter. This is Probable potassium transport system protein Kup from Leuconostoc mesenteroides subsp. mesenteroides (strain ATCC 8293 / DSM 20343 / BCRC 11652 / CCM 1803 / JCM 6124 / NCDO 523 / NBRC 100496 / NCIMB 8023 / NCTC 12954 / NRRL B-1118 / 37Y).